The following is a 319-amino-acid chain: Acetyl-coenzyme A carboxylase carboxyl transferase subunit alpha (319 aa).

The CoA carboxyltransferase C-terminal domain maps to 35 to 296 (NIDEEVHRLR…KAQLLEDLAD (262 aa)).

This sequence belongs to the AccA family. Acetyl-CoA carboxylase is a heterohexamer composed of biotin carboxyl carrier protein (AccB), biotin carboxylase (AccC) and two subunits each of ACCase subunit alpha (AccA) and ACCase subunit beta (AccD).

It localises to the cytoplasm. The catalysed reaction is N(6)-carboxybiotinyl-L-lysyl-[protein] + acetyl-CoA = N(6)-biotinyl-L-lysyl-[protein] + malonyl-CoA. It participates in lipid metabolism; malonyl-CoA biosynthesis; malonyl-CoA from acetyl-CoA: step 1/1. Its function is as follows. Component of the acetyl coenzyme A carboxylase (ACC) complex. First, biotin carboxylase catalyzes the carboxylation of biotin on its carrier protein (BCCP) and then the CO(2) group is transferred by the carboxyltransferase to acetyl-CoA to form malonyl-CoA. This Salmonella agona (strain SL483) protein is Acetyl-coenzyme A carboxylase carboxyl transferase subunit alpha.